The chain runs to 134 residues: Small ribosomal subunit protein bS6 (134 aa).

The span at 113–122 shows a compositional bias: basic and acidic residues; it reads NRDIKEKEQP. Residues 113–134 form a disordered region; that stretch reads NRDIKEKEQPSESNVDADLKVN.

This sequence belongs to the bacterial ribosomal protein bS6 family.

Functionally, binds together with bS18 to 16S ribosomal RNA. The chain is Small ribosomal subunit protein bS6 from Borrelia duttonii (strain Ly).